Here is a 490-residue protein sequence, read N- to C-terminus: Cardiolipin synthase A (490 aa).

Helical transmembrane passes span 20-40 (LGLL…HAVL) and 49-69 (IAWA…YLVF). PLD phosphodiesterase domains lie at 229–256 (VNFR…GVEY) and 403–430 (QPGF…DNRS). Catalysis depends on residues His234, Lys236, Asp241, His408, Lys410, and Asp415.

It belongs to the phospholipase D family. Cardiolipin synthase subfamily. ClsA sub-subfamily.

The protein localises to the cell inner membrane. It carries out the reaction 2 a 1,2-diacyl-sn-glycero-3-phospho-(1'-sn-glycerol) = a cardiolipin + glycerol. Functionally, catalyzes the reversible phosphatidyl group transfer from one phosphatidylglycerol molecule to another to form cardiolipin (CL) (diphosphatidylglycerol) and glycerol. This chain is Cardiolipin synthase A, found in Pseudomonas aeruginosa (strain LESB58).